The following is a 361-amino-acid chain: Phosphoserine aminotransferase (361 aa).

An L-glutamate-binding site is contributed by arginine 42. Residues 76–77 (AT), tryptophan 102, threonine 152, aspartate 172, and glutamine 195 contribute to the pyridoxal 5'-phosphate site. The residue at position 196 (lysine 196) is an N6-(pyridoxal phosphate)lysine. 237 to 238 (NT) is a binding site for pyridoxal 5'-phosphate.

The protein belongs to the class-V pyridoxal-phosphate-dependent aminotransferase family. SerC subfamily. In terms of assembly, homodimer. Requires pyridoxal 5'-phosphate as cofactor.

Its subcellular location is the cytoplasm. The enzyme catalyses O-phospho-L-serine + 2-oxoglutarate = 3-phosphooxypyruvate + L-glutamate. The catalysed reaction is 4-(phosphooxy)-L-threonine + 2-oxoglutarate = (R)-3-hydroxy-2-oxo-4-phosphooxybutanoate + L-glutamate. It functions in the pathway amino-acid biosynthesis; L-serine biosynthesis; L-serine from 3-phospho-D-glycerate: step 2/3. Its pathway is cofactor biosynthesis; pyridoxine 5'-phosphate biosynthesis; pyridoxine 5'-phosphate from D-erythrose 4-phosphate: step 3/5. Catalyzes the reversible conversion of 3-phosphohydroxypyruvate to phosphoserine and of 3-hydroxy-2-oxo-4-phosphonooxybutanoate to phosphohydroxythreonine. This chain is Phosphoserine aminotransferase, found in Xanthomonas axonopodis pv. citri (strain 306).